We begin with the raw amino-acid sequence, 327 residues long: Ferrochelatase (327 aa).

H187 and E265 together coordinate Fe cation.

Belongs to the ferrochelatase family.

The protein resides in the cytoplasm. It catalyses the reaction heme b + 2 H(+) = protoporphyrin IX + Fe(2+). The protein operates within porphyrin-containing compound metabolism; protoheme biosynthesis; protoheme from protoporphyrin-IX: step 1/1. Catalyzes the ferrous insertion into protoporphyrin IX. The sequence is that of Ferrochelatase from Chlamydia pneumoniae (Chlamydophila pneumoniae).